We begin with the raw amino-acid sequence, 239 residues long: Ribonuclease 3 (239 aa).

In terms of domain architecture, RNase III spans 12-137 (RAKLEALIGH…LIAAIYLDGG (126 aa)). Residue glutamate 50 coordinates Mg(2+). Aspartate 54 is a catalytic residue. Mg(2+)-binding residues include aspartate 123 and glutamate 126. Glutamate 126 is an active-site residue. Residues 162-231 (DAKTELQEWS…ATKMLEREGI (70 aa)) enclose the DRBM domain.

It belongs to the ribonuclease III family. In terms of assembly, homodimer. Mg(2+) serves as cofactor.

It localises to the cytoplasm. The enzyme catalyses Endonucleolytic cleavage to 5'-phosphomonoester.. Digests double-stranded RNA. Involved in the processing of primary rRNA transcript to yield the immediate precursors to the large and small rRNAs (23S and 16S). Processes some mRNAs, and tRNAs when they are encoded in the rRNA operon. Processes pre-crRNA and tracrRNA of type II CRISPR loci if present in the organism. The chain is Ribonuclease 3 from Rhizobium etli (strain ATCC 51251 / DSM 11541 / JCM 21823 / NBRC 15573 / CFN 42).